A 520-amino-acid polypeptide reads, in one-letter code: Bifunctional purine biosynthesis protein PurH (520 aa).

The 146-residue stretch at 1–146 (MAPVALLSVS…KNHADVAVLT (146 aa)) folds into the MGS-like domain.

It belongs to the PurH family.

The catalysed reaction is (6R)-10-formyltetrahydrofolate + 5-amino-1-(5-phospho-beta-D-ribosyl)imidazole-4-carboxamide = 5-formamido-1-(5-phospho-D-ribosyl)imidazole-4-carboxamide + (6S)-5,6,7,8-tetrahydrofolate. The enzyme catalyses IMP + H2O = 5-formamido-1-(5-phospho-D-ribosyl)imidazole-4-carboxamide. The protein operates within purine metabolism; IMP biosynthesis via de novo pathway; 5-formamido-1-(5-phospho-D-ribosyl)imidazole-4-carboxamide from 5-amino-1-(5-phospho-D-ribosyl)imidazole-4-carboxamide (10-formyl THF route): step 1/1. It functions in the pathway purine metabolism; IMP biosynthesis via de novo pathway; IMP from 5-formamido-1-(5-phospho-D-ribosyl)imidazole-4-carboxamide: step 1/1. This is Bifunctional purine biosynthesis protein PurH from Synechococcus sp. (strain CC9605).